A 533-amino-acid chain; its full sequence is Retinoid isomerohydrolase (533 aa).

N-acetylserine is present on Ser2. Thr101 and Thr105 each carry phosphothreonine. The S-palmitoyl cysteine; in membrane form moiety is linked to residue Cys112. Residue Lys113 is modified to N6-acetyllysine. The residue at position 117 (Ser117) is a Phosphoserine. His180 is a binding site for Fe cation. Residue Cys231 is the site of S-palmitoyl cysteine; in membrane form attachment. The Fe cation site is built by His241 and His313. 2 S-palmitoyl cysteine; in membrane form lipidation sites follow: Cys329 and Cys330. His527 serves as a coordination point for Fe cation.

It belongs to the carotenoid oxygenase family. In terms of assembly, interacts with MYO7A; this mediates light-dependent intracellular transport of RPE65. Fe(2+) serves as cofactor. In terms of processing, palmitoylation by LRAT regulates ligand binding specificity; the palmitoylated form (membrane form) specifically binds all-trans-retinyl-palmitate, while the soluble unpalmitoylated form binds all-trans-retinol (vitamin A). Retinal pigment epithelium specific.

It localises to the cytoplasm. It is found in the cell membrane. The protein localises to the microsome membrane. The enzyme catalyses an all-trans-retinyl ester + H2O = 11-cis-retinol + a fatty acid + H(+). The catalysed reaction is lutein = (3R,3'S)-zeaxanthin. It catalyses the reaction all-trans-retinyl hexadecanoate + H2O = 11-cis-retinol + hexadecanoate + H(+). Critical isomerohydrolase in the retinoid cycle involved in regeneration of 11-cis-retinal, the chromophore of rod and cone opsins. Catalyzes the cleavage and isomerization of all-trans-retinyl fatty acid esters to 11-cis-retinol which is further oxidized by 11-cis retinol dehydrogenase to 11-cis-retinal for use as visual chromophore. Essential for the production of 11-cis retinal for both rod and cone photoreceptors. Also capable of catalyzing the isomerization of lutein to meso-zeaxanthin an eye-specific carotenoid. The soluble form binds vitamin A (all-trans-retinol), making it available for LRAT processing to all-trans-retinyl ester. The membrane form, palmitoylated by LRAT, binds all-trans-retinyl esters, making them available for IMH (isomerohydrolase) processing to all-cis-retinol. The soluble form is regenerated by transferring its palmitoyl groups onto 11-cis-retinol, a reaction catalyzed by LRAT. The chain is Retinoid isomerohydrolase (RPE65) from Chlorocebus aethiops (Green monkey).